Consider the following 283-residue polypeptide: Nucleoid occlusion protein (283 aa).

The H-T-H motif DNA-binding region spans 148 to 167 (EALAQRLGKGQSTIANKLRL).

It belongs to the ParB family.

The protein resides in the cytoplasm. It is found in the nucleoid. Its function is as follows. Effects nucleoid occlusion by binding relatively nonspecifically to DNA and preventing the assembly of the division machinery in the vicinity of the nucleoid, especially under conditions that disturb the cell cycle. It helps to coordinate cell division and chromosome segregation by preventing the formation of the Z ring through the nucleoid, which would cause chromosome breakage. The protein is Nucleoid occlusion protein of Bacillus licheniformis (strain ATCC 14580 / DSM 13 / JCM 2505 / CCUG 7422 / NBRC 12200 / NCIMB 9375 / NCTC 10341 / NRRL NRS-1264 / Gibson 46).